We begin with the raw amino-acid sequence, 550 residues long: Arginine--tRNA ligase (550 aa).

A 'HIGH' region motif is present at residues 130 to 140; the sequence is ANPTGPIHIGG.

Belongs to the class-I aminoacyl-tRNA synthetase family. As to quaternary structure, monomer.

The protein localises to the cytoplasm. It carries out the reaction tRNA(Arg) + L-arginine + ATP = L-arginyl-tRNA(Arg) + AMP + diphosphate. This chain is Arginine--tRNA ligase, found in Mycolicibacterium gilvum (strain PYR-GCK) (Mycobacterium gilvum (strain PYR-GCK)).